The chain runs to 161 residues: MKVGIIMGSKSDWPTMKLAAEMLDRFNVPYETKVVSAHRTPQLLADYATQAKDRGIKVIIAGAGGAAHLPGMAAAFTSVPVLGVPVQSRALKGMDSLLSIVQMPKGIAVGTLAIGEAGAANAGILAAQIIGTSNEEVMAAVEAFRKEQTEMVLENPDPSED.

Ser-9, Asp-12, and Arg-39 together coordinate substrate.

Belongs to the AIR carboxylase family. Class I subfamily.

It carries out the reaction 5-carboxyamino-1-(5-phospho-D-ribosyl)imidazole + H(+) = 5-amino-1-(5-phospho-D-ribosyl)imidazole-4-carboxylate. Its pathway is purine metabolism; IMP biosynthesis via de novo pathway; 5-amino-1-(5-phospho-D-ribosyl)imidazole-4-carboxylate from 5-amino-1-(5-phospho-D-ribosyl)imidazole (N5-CAIR route): step 2/2. In terms of biological role, catalyzes the conversion of N5-carboxyaminoimidazole ribonucleotide (N5-CAIR) to 4-carboxy-5-aminoimidazole ribonucleotide (CAIR). This chain is N5-carboxyaminoimidazole ribonucleotide mutase, found in Aliivibrio fischeri (strain ATCC 700601 / ES114) (Vibrio fischeri).